Reading from the N-terminus, the 230-residue chain is UPF0173 metal-dependent hydrolase RSKD131_0588 (230 aa).

This sequence belongs to the UPF0173 family.

This Cereibacter sphaeroides (strain KD131 / KCTC 12085) (Rhodobacter sphaeroides) protein is UPF0173 metal-dependent hydrolase RSKD131_0588.